The primary structure comprises 1079 residues: Translation initiation factor IF-2 (1079 aa).

Basic and acidic residues-rich tracts occupy residues 52–65, 75–90, and 102–134; these read VQAQ…KEGN, RDGD…KAPE, and APER…KEPQ. A disordered region spans residues 52–488; that stretch reads VQAQRDGGAR…RGKKDVRPAA (437 aa). A compositionally biased stretch (low complexity) spans 150–184; it reads APVAKVVEAAPAETPAPEAPAVKATVTAEAAPAKT. Residues 185–194 show a composition bias toward basic and acidic residues; the sequence is VEPESERPQA. Over residues 276-291 the composition is skewed to low complexity; sequence AAVAQQQMQQQAAQQQ. A compositionally biased stretch (basic and acidic residues) spans 306 to 327; the sequence is GGYRPEGQREGGYRPEGQREGG. Low complexity-rich tracts occupy residues 348–370 and 380–398; these read EGGY…GPRP and PGAP…APRP. Over residues 419 to 429 the composition is skewed to gly residues; the sequence is PRPGGFGGAPG. The span at 461-471 shows a compositional bias: basic and acidic residues; the sequence is PRGRSDDDVMR. Basic residues predominate over residues 473-482; that stretch reads PRGRGKRGKK. Residues 578–745 form the tr-type G domain; the sequence is TRPPVVTIMG…LIAIQAEILE (168 aa). The tract at residues 587 to 594 is G1; sequence GHVDHGKT. A GTP-binding site is contributed by 587 to 594; it reads GHVDHGKT. Residues 612 to 616 are G2; sequence GITQH. A G3 region spans residues 633-636; sequence DTPG. Residues 633–637 and 687–690 each bind GTP; these read DTPGH and NKMD. The segment at 687 to 690 is G4; sequence NKMD. The interval 723–725 is G5; that stretch reads SAK.

This sequence belongs to the TRAFAC class translation factor GTPase superfamily. Classic translation factor GTPase family. IF-2 subfamily.

Its subcellular location is the cytoplasm. In terms of biological role, one of the essential components for the initiation of protein synthesis. Protects formylmethionyl-tRNA from spontaneous hydrolysis and promotes its binding to the 30S ribosomal subunits. Also involved in the hydrolysis of GTP during the formation of the 70S ribosomal complex. The sequence is that of Translation initiation factor IF-2 from Nitratidesulfovibrio vulgaris (strain DP4) (Desulfovibrio vulgaris).